The following is a 276-amino-acid chain: NADPH-dependent 7-cyano-7-deazaguanine reductase (276 aa).

A substrate-binding site is contributed by 83-85 (IES). Residue 85–86 (SK) coordinates NADPH. The Thioimide intermediate role is filled by cysteine 184. Aspartate 191 (proton donor) is an active-site residue. Substrate is bound at residue 223–224 (HE). 252 to 253 (RG) contacts NADPH.

This sequence belongs to the GTP cyclohydrolase I family. QueF type 2 subfamily. Homodimer.

The protein localises to the cytoplasm. The catalysed reaction is 7-aminomethyl-7-carbaguanine + 2 NADP(+) = 7-cyano-7-deazaguanine + 2 NADPH + 3 H(+). Its pathway is tRNA modification; tRNA-queuosine biosynthesis. Catalyzes the NADPH-dependent reduction of 7-cyano-7-deazaguanine (preQ0) to 7-aminomethyl-7-deazaguanine (preQ1). This is NADPH-dependent 7-cyano-7-deazaguanine reductase from Pseudomonas aeruginosa (strain LESB58).